The primary structure comprises 433 residues: MNAKVEVGQPAANSFFAANLADADPEIAKAIELELGRQRHEIELIASENIVSKAVLEAQGSIMTNKYAEGYPGKRYYGGCQFVDIAENLAIERVRKLFDCQFANVQPNSGSQANQAVFLALLQPGDVFMGLDLAAGGHLTHGSPVNLSGKWFKAVSYGVRQSDHLIDMDAVEALAKEHKPKLIIAGGSAYPRHWDFARFRAIADSVGAYFFVDMAHFAGLVAGGAHPSPFPHAHVVTSTTHKTLRGPRGGLVLTNDADIAKKINSAVFPGLQGGPLMHVIAAKAVAFGEALRPDFRLYAQQVVVNAGTLASRLVEKGFAISSGGTDNHLMLVDLRPKQLTGKAAEAALGRASITCNKNGVPFDTASPFVTSGIRLGSPAATSRGFGTKEFQDVADLIAETLDGLAKNGEEGNAAVEASVKERAIALTQRFPIY.

Residues leucine 133 and 137-139 (GHL) each bind (6S)-5,6,7,8-tetrahydrofolate. N6-(pyridoxal phosphate)lysine is present on lysine 242. 366 to 368 (SPF) is a (6S)-5,6,7,8-tetrahydrofolate binding site.

The protein belongs to the SHMT family. As to quaternary structure, homodimer. The cofactor is pyridoxal 5'-phosphate.

It localises to the cytoplasm. It catalyses the reaction (6R)-5,10-methylene-5,6,7,8-tetrahydrofolate + glycine + H2O = (6S)-5,6,7,8-tetrahydrofolate + L-serine. It functions in the pathway one-carbon metabolism; tetrahydrofolate interconversion. Its pathway is amino-acid biosynthesis; glycine biosynthesis; glycine from L-serine: step 1/1. Its function is as follows. Catalyzes the reversible interconversion of serine and glycine with tetrahydrofolate (THF) serving as the one-carbon carrier. This reaction serves as the major source of one-carbon groups required for the biosynthesis of purines, thymidylate, methionine, and other important biomolecules. Also exhibits THF-independent aldolase activity toward beta-hydroxyamino acids, producing glycine and aldehydes, via a retro-aldol mechanism. The chain is Serine hydroxymethyltransferase from Beijerinckia indica subsp. indica (strain ATCC 9039 / DSM 1715 / NCIMB 8712).